The primary structure comprises 51 residues: Large ribosomal subunit protein eL39 (51 aa).

The tract at residues 32-51 (KRRVTRSPARRHWRRQKLKA) is disordered.

It belongs to the eukaryotic ribosomal protein eL39 family.

The polypeptide is Large ribosomal subunit protein eL39 (Pyrobaculum calidifontis (strain DSM 21063 / JCM 11548 / VA1)).